We begin with the raw amino-acid sequence, 295 residues long: Nicotinate-nucleotide pyrophosphorylase [carboxylating] (295 aa).

Residues arginine 107, 142 to 144 (TRK), arginine 166, lysine 176, glutamate 206, aspartate 227, and 256 to 258 (SGG) each bind substrate.

The protein belongs to the NadC/ModD family. Hexamer formed by 3 homodimers.

It is found in the cytoplasm. The protein localises to the nucleus. It catalyses the reaction nicotinate beta-D-ribonucleotide + CO2 + diphosphate = quinolinate + 5-phospho-alpha-D-ribose 1-diphosphate + 2 H(+). It functions in the pathway cofactor biosynthesis; NAD(+) biosynthesis; nicotinate D-ribonucleotide from quinolinate: step 1/1. Its function is as follows. Involved in the catabolism of quinolinic acid (QA). The sequence is that of Nicotinate-nucleotide pyrophosphorylase [carboxylating] (BNA6) from Saccharomyces cerevisiae (strain ATCC 204508 / S288c) (Baker's yeast).